The chain runs to 96 residues: MKLRPLHDRVIVKRVENETKTASGIVIPDSAAEKPDQGEVLAVGPGKKNDKGDLSPMAVKIGDRVLFGKYSGQTVKVDGDELLVMKEEDLFAVVEK.

It belongs to the GroES chaperonin family. As to quaternary structure, heptamer of 7 subunits arranged in a ring. Interacts with the chaperonin GroEL.

The protein resides in the cytoplasm. Its function is as follows. Together with the chaperonin GroEL, plays an essential role in assisting protein folding. The GroEL-GroES system forms a nano-cage that allows encapsulation of the non-native substrate proteins and provides a physical environment optimized to promote and accelerate protein folding. GroES binds to the apical surface of the GroEL ring, thereby capping the opening of the GroEL channel. This is Co-chaperonin GroES from Polaromonas sp. (strain JS666 / ATCC BAA-500).